The sequence spans 467 residues: 6-phosphogluconate dehydrogenase, decarboxylating (467 aa).

NADP(+)-binding positions include 9–14 (GLGVMG), 32–34 (NYT), 73–75 (VTA), and Asn-101. Substrate-binding positions include Asn-101 and 127 to 129 (SGG). Lys-181 functions as the Proton acceptor in the catalytic mechanism. Position 184–185 (184–185 (HN)) interacts with substrate. The active-site Proton donor is the Glu-188. 4 residues coordinate substrate: Tyr-189, Lys-259, Arg-286, and His-451.

The protein belongs to the 6-phosphogluconate dehydrogenase family. In terms of assembly, homodimer.

It catalyses the reaction 6-phospho-D-gluconate + NADP(+) = D-ribulose 5-phosphate + CO2 + NADPH. The protein operates within carbohydrate degradation; pentose phosphate pathway; D-ribulose 5-phosphate from D-glucose 6-phosphate (oxidative stage): step 3/3. Functionally, catalyzes the oxidative decarboxylation of 6-phosphogluconate to ribulose 5-phosphate and CO(2), with concomitant reduction of NADP to NADPH. The chain is 6-phosphogluconate dehydrogenase, decarboxylating (gntZ) from Bacillus licheniformis.